A 114-amino-acid polypeptide reads, in one-letter code: MSVLSLVVLSLLMALPPASCQQGRGNLQPWMQGLIAVAVFLVLVAIAFAVNHFWCQEKPAPINMVMTIGNKADGILVGTDGKYSSMAASFRSSEHENAYENIPEEEGKVCSTPM.

Residues 1–28 (MSVLSLVVLSLLMALPPASCQQGRGNLQ) are Extracellular-facing. The helical transmembrane segment at 29 to 51 (PWMQGLIAVAVFLVLVAIAFAVN) threads the bilayer. Residues 52–114 (HFWCQEKPAP…EEGKVCSTPM (63 aa)) are Cytoplasmic-facing. The residue at position 85 (Ser-85) is a Phosphoserine.

This sequence belongs to the PDZK1-interacting protein 1/SMIM24 family. As to quaternary structure, forms a heterodimer (via N-terminal transmembrane helix) with SLC5A2/SGLT2 (via TM13); this interaction enhances SLC5A2 transporter activity. Interacts with PDZK1.

The protein localises to the apical cell membrane. In terms of biological role, auxiliary protein of electrogenic Na(+)-coupled sugar symporter SLC5A2/SGLT2 and SLC5A1/SGLT1. Essential for the transporter activity of SLC5A2/SGLT2 but not SLC5A1/SGLT1. The polypeptide is PDZK1-interacting protein 1 (Bos taurus (Bovine)).